The sequence spans 859 residues: ATP-dependent RNA helicase DDX24 (859 aa).

An N6-acetyllysine modification is found at Lys17. Ser60 is subject to Phosphoserine. Positions 61–175 (PAKNPSSLFS…SQSTAAKVPK (115 aa)) are disordered. Position 71 is an N6-acetyllysine (Lys71). A phosphoserine mark is found at Ser82 and Ser94. Acidic residues predominate over residues 82 to 91 (SEEEEEEEGE). Over residues 95–105 (PKKKIKLKKSK) the composition is skewed to basic residues. Residues 106–115 (NVATEGTSTQ) are compositionally biased toward polar residues. A Q motif motif is present at residues 192-220 (SAWKDLFVPRPVLRALSFLGFSAPTPIQV). Residues 224 to 528 (APAIRDKLDI…RILHKKHTKK (305 aa)) enclose the Helicase ATP-binding domain. 237–244 (AETGSGKT) provides a ligand contact to ATP. Residues 262 to 374 (NAAPPPSNTE…QTGNLKQELD (113 aa)) are disordered. A compositionally biased stretch (basic and acidic residues) spans 277–293 (TRPEAGAETRSPGKAEA). Phosphoserine is present on residues Ser287 and Ser295. The span at 294–304 (ESDALPDDTVI) shows a compositional bias: acidic residues. Thr302 is modified (phosphothreonine). A Glycyl lysine isopeptide (Lys-Gly) (interchain with G-Cter in SUMO2) cross-link involves residue Lys370. The DEAD box signature appears at 471 to 474 (DEAD). Positions 578–723 (YLYYFLMQYP…LFPVQTKYMD (146 aa)) constitute a Helicase C-terminal domain. Residues Lys624, Lys808, and Lys825 each participate in a glycyl lysine isopeptide (Lys-Gly) (interchain with G-Cter in SUMO2) cross-link. Composition is skewed to polar residues over residues 799–814 (PLFT…TQSG) and 823–834 (PSKSESALSCLS). Positions 799-859 (PLFTESQKTK…EQPQPSTSAN (61 aa)) are disordered.

Belongs to the DEAD box helicase family. DDX24/MAK5 subfamily. In terms of assembly, interacts with FADD. Interacts with RIPK1; this interaction disrupts RLR signaling activation of IFN-dependent transcription factor IRF7. Interacts with NIP7. Interacts with EP300; this interaction prevents TP53 acetylation mediated by EP300. Post-translationally, ubiquitinated by MDM2 without targeting DDX24 for proteasomal degradation. Instead, polyubiquitylated DDX24 promotes interaction with NIP7, a component of pre-rRNP processing complex, and associates with pre-rRNA molecules and pre-ribosomal particles.

It is found in the cytoplasm. Its subcellular location is the nucleus. It carries out the reaction ATP + H2O = ADP + phosphate + H(+). In terms of biological role, ATP-dependent RNA helicase that plays a role in various aspects of RNA metabolism including pre-mRNA splicing and is thereby involved in different biological processes such as cell cycle regulation or innate immunity. Plays an inhibitory role in TP53 transcriptional activity and subsequently in TP53 controlled cell growth arrest and senescence by inhibiting its EP300 mediated acetylation. Negatively regulates cytosolic RNA-mediated innate immune signaling at least in part by affecting RIPK1/IRF7 interactions. Alternatively, possesses antiviral activity by recognizing gammaherpesvirus transcripts in the context of lytic reactivation. Plays an essential role in cell cycle regulation in vascular smooth muscle cells by interacting with and regulating FANCA (Fanconi anemia complementation group A) mRNA. The polypeptide is ATP-dependent RNA helicase DDX24 (DDX24) (Pongo abelii (Sumatran orangutan)).